Reading from the N-terminus, the 324-residue chain is MNGAGEINASRHRKENELKTCQILGAPVQSGASQPGCLMGPDAFRTAGLTQVLTELGWAVTDLGDATPTVEPELSHPNSAVKNLDALVGWTRSLSQKALEMARSCDLPVFLGGDHSMSAGTVSGVAQRTAELGKEQFVLWLDAHTDLHTLHTTASGNLHGTPVAYYTGQSGFEGLPPLAAPVNPRNVSMMGIRSVDPEERRRVAEIGVQVADMRVLDEQGVVRPLEAFLDRVSKVSGRLHVSLDVDFLDPAIAPAVGTTVPGGATFREAHLIMEMLHDSGLVTSLDLAELNPFLDERGRTARLITDLASSLFGRRVFDRVTTAF.

Histidine 115, aspartate 142, histidine 144, and aspartate 146 together coordinate Mn(2+). Substrate-binding positions include 144 to 148, 155 to 157, and aspartate 196; these read HTDLH and SGN. Mn(2+) contacts are provided by aspartate 244 and aspartate 246. The substrate site is built by threonine 258 and glutamate 289.

This sequence belongs to the arginase family. As to quaternary structure, homohexamer. Requires Mn(2+) as cofactor.

It catalyses the reaction L-arginine + H2O = urea + L-ornithine. Its pathway is nitrogen metabolism; urea cycle; L-ornithine and urea from L-arginine: step 1/1. This chain is Arginase (arcA), found in Agrobacterium fabrum (strain C58 / ATCC 33970) (Agrobacterium tumefaciens (strain C58)).